The chain runs to 303 residues: Hemolysin E (303 aa).

Cys87 and Cys285 are joined by a disulfide. The chain crosses the membrane as a helical span at residues 179 to 199 (AGAAAGIVAGPFGLIISYSIA).

Belongs to the hemolysin E family. In terms of assembly, monomer and oligomer. In periplasm, it is present as a monomer, while in outer membrane vesicles, it oligomerizes to form a pore structure that is active. The pore is formed by a dodecamer. Post-translationally, in periplasm, it forms a disulfide bond, which prevents the oligomerization. In outer membrane vesicles, the redox status prevents formation of the disulfide bond, leading to oligomerization and pore formation.

The protein resides in the secreted. It localises to the periplasm. The protein localises to the host cell membrane. Its function is as follows. Toxin, which has some hemolytic activity towards mammalian cells. Acts by forming a pore-like structure upon contact with mammalian cells. This Salmonella paratyphi A (strain ATCC 9150 / SARB42) protein is Hemolysin E (hlyE).